The primary structure comprises 745 residues: 5-methyltetrahydropteroyltriglutamate--homocysteine methyltransferase (745 aa).

Residues 17 to 20 and Lys111 contribute to the 5-methyltetrahydropteroyltri-L-glutamate site; that span reads RELK. L-homocysteine is bound by residues 421-423 and Glu474; that span reads IGS. L-methionine is bound by residues 421 to 423 and Glu474; that span reads IGS. Residues 505–506 and Trp551 each bind 5-methyltetrahydropteroyltri-L-glutamate; that span reads RC. An L-homocysteine-binding site is contributed by Asp589. Asp589 contributes to the L-methionine binding site. Glu595 is a 5-methyltetrahydropteroyltri-L-glutamate binding site. 3 residues coordinate Zn(2+): His631, Cys633, and Glu655. Catalysis depends on His684, which acts as the Proton donor. Residue Cys716 participates in Zn(2+) binding.

Belongs to the vitamin-B12 independent methionine synthase family. The cofactor is Zn(2+).

It carries out the reaction 5-methyltetrahydropteroyltri-L-glutamate + L-homocysteine = tetrahydropteroyltri-L-glutamate + L-methionine. It participates in amino-acid biosynthesis; L-methionine biosynthesis via de novo pathway; L-methionine from L-homocysteine (MetE route): step 1/1. Catalyzes the transfer of a methyl group from 5-methyltetrahydrofolate to homocysteine resulting in methionine formation. The protein is 5-methyltetrahydropteroyltriglutamate--homocysteine methyltransferase of Thermodesulfovibrio yellowstonii (strain ATCC 51303 / DSM 11347 / YP87).